The following is a 156-amino-acid chain: Small ribosomal subunit protein uS7 (156 aa).

This sequence belongs to the universal ribosomal protein uS7 family. In terms of assembly, part of the 30S ribosomal subunit. Contacts proteins S9 and S11.

Its function is as follows. One of the primary rRNA binding proteins, it binds directly to 16S rRNA where it nucleates assembly of the head domain of the 30S subunit. Is located at the subunit interface close to the decoding center, probably blocks exit of the E-site tRNA. This is Small ribosomal subunit protein uS7 from Nitrobacter hamburgensis (strain DSM 10229 / NCIMB 13809 / X14).